The following is a 329-amino-acid chain: Probable CTD kinase subunit alpha homolog (329 aa).

Residues 22 to 297 form the Protein kinase domain; the sequence is YEKIRIIGEG…VEQVVGSKYF (276 aa). ATP contacts are provided by residues 28-36 and Lys-49; that span reads IGEGTFGQV. Residue Asp-139 is the Proton acceptor of the active site.

It belongs to the protein kinase superfamily. CMGC Ser/Thr protein kinase family. CDC2/CDKX subfamily. In terms of assembly, component of the CTDK-I complex.

It is found in the nucleus. It localises to the nucleolus. The catalysed reaction is [DNA-directed RNA polymerase] + ATP = phospho-[DNA-directed RNA polymerase] + ADP + H(+). In terms of biological role, catalytic subunit of the CTDK-I complex, which hyperphosphorylates the C-terminal heptapeptide repeat domain (CTD) of the largest RNA polymerase II subunit. Involved in RNA polymerase II transcriptional elongation and pre-mRNA 3'-end processing. The sequence is that of Probable CTD kinase subunit alpha homolog (CTK1) from Encephalitozoon cuniculi (strain GB-M1) (Microsporidian parasite).